Here is a 304-residue protein sequence, read N- to C-terminus: E3 ubiquitin-protein ligase CHIP (304 aa).

The segment covering 1–10 (MKGKEEKEGG) has biased composition (basic and acidic residues). The segment at 1–30 (MKGKEEKEGGARLGTGGGGSPDKSPSAQEL) is disordered. Lys2 participates in a covalent cross-link: Glycyl lysine isopeptide (Lys-Gly) (interchain with G-Cter in ubiquitin). The span at 11–20 (ARLGTGGGGS) shows a compositional bias: gly residues. A Phosphoserine modification is found at Ser20. Residue Lys23 forms a Glycyl lysine isopeptide (Lys-Gly) (interchain with G-Cter in ubiquitin) linkage. 2 positions are modified to phosphoserine: Ser24 and Ser26. TPR repeat units lie at residues 27–60 (AQELKEQGNRLFVGRKYPEAAACYGRAITRNPLV), 61–94 (AVYYTNRALCYLKMQQPEQALADCRRALELDGQS), and 96–128 (KAHFFLGQCQLEMESYDEAIANLQRAYSLAKEQ). The segment at 102 to 201 (GQCQLEMESY…GHIRAQQACI (100 aa)) is required for interaction with MAPK7. A required for interaction with and ubiquitination of MYOCD region spans residues 143–197 (AKKKRWNSIEERRIHQESELHSYLTRLIAAERERELEECQRNHEGDEDDGHIRAQ). The tract at residues 144–198 (KKKRWNSIEERRIHQESELHSYLTRLIAAERERELEECQRNHEGDEDDGHIRAQQ) is required for interaction with FOXO1. Residues 144-304 (KKKRWNSIEE…ISENGWVEDY (161 aa)) form a required for ubiquitination of FOXO1 region. Ser150 is modified (phosphoserine). Residues Lys222 and Lys256 each participate in a glycyl lysine isopeptide (Lys-Gly) (interchain with G-Cter in ubiquitin) cross-link. The U-box domain occupies 227 to 301 (DIPDYLCGKI…DAFISENGWV (75 aa)). Position 274 is a phosphoserine (Ser274).

In terms of assembly, homodimer. Interacts with BAG2, and with the E2 ubiquitin conjugating enzymes UBE2D1, UBE2D2 and UBE2D3. Detected in a ternary complex containing STUB1, HSPA1A and HSPBP1. Part of a complex composed of STUB1/CHIP, VCP/p97, CHRNA3, and UBXN2A that modulates the ubiquitination and endoplasmic reticulum-associated degradation (ERAD) of CHRNA3. Within the complex UBXN2A acts as a scaffold protein required for the interaction of CHRNA3 with VCP/p97, this interaction also inhibits CHRNA3 ubiquitination by STUB1/CHIP and subsequently ERAD. Interacts with MKKS. Interacts with DNAAF4. Interacts (via the U-box domain) with the UBE2V2-UBE2N heterodimer; the complex has a specific 'Lys-63'-linked polyubiquitination activity. Interacts (when monoubiquitinated) with ATXN3. Interacts with UBE2W. Interacts with DNAJB6. Interacts with FLCN and HSP90AA1. Interacts with HSP90. Interacts with UBE2N and UBE2V1. Interacts (via TPR repeats) with HSPA8 (via C-terminus). Interacts (via TPR repeats) with HSPA1A (via C-terminus). Interacts with the non-acetylated form of HSPA1A and HSPA1B. Interacts with SMAD3 and HSP90AB1. Interacts with UBE4B. Interacts with PRMT5. Interacts with MYOCD (via C-terminus). Interacts with FOXO1 (when phosphorylated on 'Ser-250'). Interacts with MAPK7/ERK5; the interaction is enhanced in the presence of IGF1 or MAP2K5 and promotes STUB1/CHIP E3 ligase activity. Interacts with and ubiquitinates ESR1; the interaction is promoted in the absence of estradiol (17-beta-estradiol/E2). Interacts with ESR2. Interacts with and ubiquitinates NFATC3; HSPA1A/HSP70 is required as a co-chaperone. In macrophages, interacts with PAQR3; the interaction promotes PPARG poylubiquitination and STUB1-mediated degradation. Component of the chaperone-assisted selective autophagy (CASA) complex consisting of BAG3, HSPA8/HSC70, HSPB8 and STUB1/CHIP. Auto-ubiquitinated; mediated by UBE2D1 and UBE2D2 and enhanced in the presence of MAP2K5. Monoubiquitinated at Lys-2 following cell stress by UBE2W, promoting the interaction with ATXN3. Expressed in the adventitia layer of the carotid artery (at protein level). Expressed in the CA1 region of the hippocampus (at protein level). Expressed in the uterus (at protein level).

It localises to the cytoplasm. The protein resides in the nucleus. The protein localises to the mitochondrion. The enzyme catalyses S-ubiquitinyl-[E2 ubiquitin-conjugating enzyme]-L-cysteine + [acceptor protein]-L-lysine = [E2 ubiquitin-conjugating enzyme]-L-cysteine + N(6)-ubiquitinyl-[acceptor protein]-L-lysine.. It participates in protein modification; protein ubiquitination. E3 ubiquitin-protein ligase which targets misfolded chaperone substrates towards proteasomal degradation. Plays a role in the maintenance of mitochondrial morphology and promotes mitophagic removal of dysfunctional mitochondria; thereby acts as a protector against apoptosis in response to cellular stress. Negatively regulates vascular smooth muscle contraction, via degradation of the transcriptional activator MYOCD and subsequent loss of transcription of genes involved in vascular smooth muscle contraction. Promotes survival and proliferation of cardiac smooth muscle cells via ubiquitination and degradation of FOXO1, resulting in subsequent repression of FOXO1-mediated transcription of pro-apoptotic genes. Ubiquitinates ICER-type isoforms of CREM and targets them for proteasomal degradation, thereby acts as a positive effector of MAPK/ERK-mediated inhibition of apoptosis in cardiomyocytes. Inhibits lipopolysaccharide-induced apoptosis and hypertrophy in cardiomyocytes, via ubiquitination and subsequent proteasomal degradation of NFATC3. Collaborates with ATXN3 in the degradation of misfolded chaperone substrates: ATXN3 restricting the length of ubiquitin chain attached to STUB1/CHIP substrates and preventing further chain extension. Ubiquitinates NOS1 in concert with Hsp70 and Hsp40. Modulates the activity of several chaperone complexes, including Hsp70, Hsc70 and Hsp90. Ubiquitinates CHRNA3 targeting it for endoplasmic reticulum-associated degradation in cortical neurons, as part of the STUB1-VCP-UBXN2A complex. Ubiquitinates and promotes ESR1 proteasomal degradation in response to age-related circulating estradiol (17-beta-estradiol/E2) decline, thereby promotes neuronal apoptosis in response to ischemic reperfusion injury. Mediates transfer of non-canonical short ubiquitin chains to HSPA8 that have no effect on HSPA8 degradation. Mediates polyubiquitination of DNA polymerase beta (POLB) at 'Lys-41', 'Lys-61' and 'Lys-81', thereby playing a role in base-excision repair: catalyzes polyubiquitination by amplifying the HUWE1/ARF-BP1-dependent monoubiquitination and leading to POLB-degradation by the proteasome. Mediates polyubiquitination of CYP3A4. Ubiquitinates EPHA2 and may regulate the receptor stability and activity through proteasomal degradation. Acts as a co-chaperone for HSPA1A and HSPA1B chaperone proteins and promotes ubiquitin-mediated protein degradation. Negatively regulates the suppressive function of regulatory T-cells (Treg) during inflammation by mediating the ubiquitination and degradation of FOXP3 in a HSPA1A/B-dependent manner. Catalyzes monoubiquitination of SIRT6, preventing its degradation by the proteasome. Likely mediates polyubiquitination and down-regulates plasma membrane expression of PD-L1/CD274, an immune inhibitory ligand critical for immune tolerance to self and antitumor immunity. Negatively regulates TGF-beta signaling by modulating the basal level of SMAD3 via ubiquitin-mediated degradation. Plays a role in the degradation of TP53. Mediates ubiquitination of RIPK3 leading to its subsequent proteasome-dependent degradation. May regulate myosin assembly in striated muscles together with UBE4B and VCP/p97 by targeting myosin chaperone UNC45B for proteasomal degradation. Ubiquitinates PPARG in macrophages playing a role in M2 macrophages polarization and angiogenesis. The chain is E3 ubiquitin-protein ligase CHIP from Rattus norvegicus (Rat).